The sequence spans 399 residues: Elongation factor Tu (399 aa).

Positions 10 to 209 (KPHVNIGTIG…EVDAYIPTPE (200 aa)) constitute a tr-type G domain. Residues 19–26 (GHVDHGKT) are G1. Position 19 to 26 (19 to 26 (GHVDHGKT)) interacts with GTP. T26 serves as a coordination point for Mg(2+). Residues 60 to 64 (GITIA) are G2. The segment at 81-84 (DCPG) is G3. Residues 81 to 85 (DCPGH) and 136 to 139 (NKQD) each bind GTP. Residues 136-139 (NKQD) form a G4 region. Residues 174–176 (SAL) are G5.

This sequence belongs to the TRAFAC class translation factor GTPase superfamily. Classic translation factor GTPase family. EF-Tu/EF-1A subfamily. In terms of assembly, monomer.

Its subcellular location is the cytoplasm. It catalyses the reaction GTP + H2O = GDP + phosphate + H(+). GTP hydrolase that promotes the GTP-dependent binding of aminoacyl-tRNA to the A-site of ribosomes during protein biosynthesis. The polypeptide is Elongation factor Tu (Helicobacter pylori (strain Shi470)).